The chain runs to 24 residues: Brevinin-1Bb (24 aa).

Cysteine 18 and cysteine 24 are disulfide-bonded.

As to expression, expressed by the skin glands.

The protein localises to the secreted. In terms of biological role, antibacterial activity against Gram-positive bacterium S.aureus and Gram-negative bacterium E.coli. Has activity against C.albicans. The chain is Brevinin-1Bb from Lithobates berlandieri (Rio Grande leopard frog).